The following is a 181-amino-acid chain: MSRVAKSPITIPTGVEVTITSNLMSVKGRFGQLNMSIHPCIVITNTNNKLSFDITITEKKEQKKAWAQAGTARANTANLIQGVTEGWEKKLTLIGVGYRAKVMERVLNLTLGFSHPINYKLPEGITVEAPSQTEIIIKGMDKQKVGQVAAEIRAYHPPEPYKGKGVCYIDEQVVRKEAKKK.

Belongs to the universal ribosomal protein uL6 family. In terms of assembly, part of the 50S ribosomal subunit.

In terms of biological role, this protein binds to the 23S rRNA, and is important in its secondary structure. It is located near the subunit interface in the base of the L7/L12 stalk, and near the tRNA binding site of the peptidyltransferase center. The protein is Large ribosomal subunit protein uL6 of Ruthia magnifica subsp. Calyptogena magnifica.